The primary structure comprises 101 residues: MVERLSEAARRAALDALPDWSELPDREAITRTLKFKDFGQAFGFMAQVALVAEKHDHHPEWRNVYNTVEVTLTTHDAGGVTARDVDLARAIDAIAAPLSPR.

The protein belongs to the pterin-4-alpha-carbinolamine dehydratase family.

It carries out the reaction (4aS,6R)-4a-hydroxy-L-erythro-5,6,7,8-tetrahydrobiopterin = (6R)-L-erythro-6,7-dihydrobiopterin + H2O. The sequence is that of Putative pterin-4-alpha-carbinolamine dehydratase from Rhodopseudomonas palustris (strain BisA53).